A 1033-amino-acid polypeptide reads, in one-letter code: Isoleucine--tRNA ligase 2 (1033 aa).

The 'HIGH' region signature appears at 47 to 57; sequence PTANGLPHVGH. Positions 590–594 match the 'KMSKS' region motif; it reads KMSKS. Lys593 provides a ligand contact to ATP.

Belongs to the class-I aminoacyl-tRNA synthetase family. IleS type 2 subfamily. As to quaternary structure, monomer. Requires Zn(2+) as cofactor.

It is found in the cytoplasm. It catalyses the reaction tRNA(Ile) + L-isoleucine + ATP = L-isoleucyl-tRNA(Ile) + AMP + diphosphate. In terms of biological role, catalyzes the attachment of isoleucine to tRNA(Ile). As IleRS can inadvertently accommodate and process structurally similar amino acids such as valine, to avoid such errors it has two additional distinct tRNA(Ile)-dependent editing activities. One activity is designated as 'pretransfer' editing and involves the hydrolysis of activated Val-AMP. The other activity is designated 'posttransfer' editing and involves deacylation of mischarged Val-tRNA(Ile). This chain is Isoleucine--tRNA ligase 2, found in Bacillus thuringiensis subsp. konkukian (strain 97-27).